A 1028-amino-acid polypeptide reads, in one-letter code: Endosome/lysosome-associated apoptosis and autophagy regulator family member 2 (1028 aa).

An N-terminal signal peptide occupies residues 1–47; that stretch reads MLLLTLRRAKGRDRGRPAGGPRRALSLPWSPAWICCWALAGCQAVWA. Residues 48–928 are Extracellular-facing; it reads GDSSSSGRPL…TCETVDFWLK (881 aa). N-linked (GlcNAc...) asparagine glycosylation occurs at N168. 3 disulfides stabilise this stretch: C292/C309, C322/C345, and C325/C357. Residues N404 and N690 are each glycosylated (N-linked (GlcNAc...) asparagine). The MRH domain occupies 671–876; it reads SDCFFYHEKE…LWESAEACPL (206 aa). 4 disulfides stabilise this stretch: C673–C719, C729–C757, C826–C862, and C838–C874. The chain crosses the membrane as a helical span at residues 929–949; the sequence is VGAGVGAFTAVLLVALTCYFW. Over 950–1028 the chain is Cytoplasmic; sequence KKNQKLEYKY…QLKSSRCPNI (79 aa). S1017 carries the phosphoserine modification.

Belongs to the ELAPOR family.

It localises to the cell membrane. Its function is as follows. Functions as a regulator of the BMP signaling pathway and may be involved in epidermal differentiation. The protein is Endosome/lysosome-associated apoptosis and autophagy regulator family member 2 of Mus musculus (Mouse).